We begin with the raw amino-acid sequence, 358 residues long: Acyl-CoA desaturase 1 (358 aa).

Topologically, residues 1 to 71 (MPAHMLQEIS…EGPPPKLEYV (71 aa)) are cytoplasmic. Residues 8 to 24 (EISSSYTTTTTITEPPS) show a composition bias toward low complexity. The disordered stretch occupies residues 8–33 (EISSSYTTTTTITEPPSGNLQNGREK). A helical transmembrane segment spans residues 72–92 (WRNIILMALLHVGALYGITLI). Asn-74 provides a ligand contact to substrate. Over 93–96 (PSSK) the chain is Lumenal. The chain crosses the membrane as a helical span at residues 97-117 (VYTLLWGIFYYLISALGITAG). Over 118–216 (AHRLWSHRTY…EKLVMFQRRY (99 aa)) the chain is Cytoplasmic. Positions 119 and 124 each coordinate Fe cation. Residues 119–124 (HRLWSH) carry the Histidine box-1 motif. 3 residues coordinate substrate: Asn-147, Arg-154, and Asp-155. His-156, His-159, and His-160 together coordinate Fe cation. Positions 156–160 (HRAHH) match the Histidine box-2 motif. Residues Arg-187 and Lys-188 each coordinate substrate. The helical transmembrane segment at 217–236 (YKPGLLLMCFILPTLVPWYC) threads the bilayer. Residues 237–240 (WGET) lie on the Lumenal side of the membrane. Residues 241 to 262 (FLHSLFVSTFLRYTLVLNATWL) form a helical membrane-spanning segment. Residue Trp-261 coordinates substrate. Over 263–358 (VNSAAHLYGY…RTGDGSHKSS (96 aa)) the chain is Cytoplasmic. Fe cation contacts are provided by His-268, His-297, His-300, and His-301. A Histidine box-3 motif is present at residues 297–301 (HNYHH).

The protein belongs to the fatty acid desaturase type 1 family. Requires Fe(2+) as cofactor. Detected in liver (at protein level). Detected in adipose tissue. Detected in liver when rats are kept on a fat-free diet, but not when their food contains unsaturated fatty acids.

The protein localises to the endoplasmic reticulum membrane. It localises to the membrane. The catalysed reaction is octadecanoyl-CoA + 2 Fe(II)-[cytochrome b5] + O2 + 2 H(+) = (9Z)-octadecenoyl-CoA + 2 Fe(III)-[cytochrome b5] + 2 H2O. In terms of biological role, stearoyl-CoA desaturase that utilizes O(2) and electrons from reduced cytochrome b5 to introduce the first double bond into saturated fatty acyl-CoA substrates. Catalyzes the insertion of a cis double bond at the Delta-9 position into fatty acyl-CoA substrates including palmitoyl-CoA and stearoyl-CoA. Gives rise to a mixture of 16:1 and 18:1 unsaturated fatty acids. Plays an important role in lipid biosynthesis. Plays an important role in regulating the expression of genes that are involved in lipogenesis and in regulating mitochondrial fatty acid oxidation. Plays an important role in body energy homeostasis. Contributes to the biosynthesis of membrane phospholipids, cholesterol esters and triglycerides. Required for normal development of sebaceous glands. Required for the biosynthesis of normal levels of Delta-9 unsaturated fatty acids and 1-alkyl-2,3-diacylglycerol in the Harderian gland. Required for normal production of meibum, an oily material that prevents drying of the cornea. This Rattus norvegicus (Rat) protein is Acyl-CoA desaturase 1 (Scd1).